A 442-amino-acid polypeptide reads, in one-letter code: Trigger factor (442 aa).

The PPIase FKBP-type domain maps to 163-248 (GDQVVIDFLG…IKEVKAPKAA (86 aa)).

Belongs to the FKBP-type PPIase family. Tig subfamily.

It is found in the cytoplasm. It catalyses the reaction [protein]-peptidylproline (omega=180) = [protein]-peptidylproline (omega=0). Functionally, involved in protein export. Acts as a chaperone by maintaining the newly synthesized protein in an open conformation. Functions as a peptidyl-prolyl cis-trans isomerase. The polypeptide is Trigger factor (Dinoroseobacter shibae (strain DSM 16493 / NCIMB 14021 / DFL 12)).